The following is a 229-amino-acid chain: ATP synthase subunit a (229 aa).

The next 6 helical transmembrane spans lie at 25–45 (ADAVVYTWLIMIGLVVLSIAA), 82–102 (FFPLVATLALFILVSNLIGLV), 104–124 (GFFPPTANINTTAACAVVVFV), 142–162 (FLGPIAWLAPMMFFIEVIGHL), 181–201 (LVLIIFFGLAPFIVPLPMMLM), and 202–222 (GVLVSFIQAFVFMLLAMIYIQ).

The protein belongs to the ATPase A chain family. In terms of assembly, F-type ATPases have 2 components, CF(1) - the catalytic core - and CF(0) - the membrane proton channel. CF(1) has five subunits: alpha(3), beta(3), gamma(1), delta(1), epsilon(1). CF(0) has three main subunits: a(1), b(2) and c(9-12). The alpha and beta chains form an alternating ring which encloses part of the gamma chain. CF(1) is attached to CF(0) by a central stalk formed by the gamma and epsilon chains, while a peripheral stalk is formed by the delta and b chains.

It localises to the cell inner membrane. In terms of biological role, key component of the proton channel; it plays a direct role in the translocation of protons across the membrane. This chain is ATP synthase subunit a, found in Citrifermentans bemidjiense (strain ATCC BAA-1014 / DSM 16622 / JCM 12645 / Bem) (Geobacter bemidjiensis).